Reading from the N-terminus, the 423-residue chain is Flotillin-1 (423 aa).

This sequence belongs to the band 7/mec-2 family. Flotillin subfamily. As to quaternary structure, heterooligomeric complex of flotillin-1 and flotillin-2 and caveolin-1 and caveolin-2. As to expression, normally expressed in growing retinal exons of newly differentiated ganglion cells at the retinal margin. After optic nerve injury, expressed in all retinal ganglion cells and retinal axons. Also expressed in endothelial cells, spinal cord, larval and adult skin, muscle processes, thymus and gill macrophages.

The protein localises to the cell membrane. Its subcellular location is the endosome. The protein resides in the membrane. It localises to the caveola. It is found in the melanosome. The protein localises to the membrane raft. Functionally, may act as a scaffolding protein within caveolar membranes, functionally participating in formation of caveolae or caveolae-like vesicles. The chain is Flotillin-1 (flot1) from Carassius auratus (Goldfish).